Consider the following 150-residue polypeptide: Large ribosomal subunit protein bL9 (150 aa).

The protein belongs to the bacterial ribosomal protein bL9 family.

Its function is as follows. Binds to the 23S rRNA. The sequence is that of Large ribosomal subunit protein bL9 from Colwellia psychrerythraea (strain 34H / ATCC BAA-681) (Vibrio psychroerythus).